The following is a 408-amino-acid chain: 4-hydroxy-3-methylbut-2-en-1-yl diphosphate synthase (ferredoxin) (408 aa).

The span at 1-21 (MQTLPTPTTSSNTANQSTFDT) shows a compositional bias: polar residues. The segment at 1–26 (MQTLPTPTTSSNTANQSTFDTTIKRR) is disordered. [4Fe-4S] cluster contacts are provided by Cys-317, Cys-320, Cys-351, and Glu-358.

This sequence belongs to the IspG family. [4Fe-4S] cluster is required as a cofactor.

It carries out the reaction (2E)-4-hydroxy-3-methylbut-2-enyl diphosphate + 2 oxidized [2Fe-2S]-[ferredoxin] + H2O = 2-C-methyl-D-erythritol 2,4-cyclic diphosphate + 2 reduced [2Fe-2S]-[ferredoxin] + H(+). Its pathway is isoprenoid biosynthesis; isopentenyl diphosphate biosynthesis via DXP pathway; isopentenyl diphosphate from 1-deoxy-D-xylulose 5-phosphate: step 5/6. Converts 2C-methyl-D-erythritol 2,4-cyclodiphosphate (ME-2,4cPP) into 1-hydroxy-2-methyl-2-(E)-butenyl 4-diphosphate. In Trichormus variabilis (strain ATCC 29413 / PCC 7937) (Anabaena variabilis), this protein is 4-hydroxy-3-methylbut-2-en-1-yl diphosphate synthase (ferredoxin).